A 488-amino-acid polypeptide reads, in one-letter code: Glutamyl-tRNA(Gln) amidotransferase subunit A (488 aa).

Active-site charge relay system residues include Lys77 and Ser152. Residue Ser176 is the Acyl-ester intermediate of the active site.

This sequence belongs to the amidase family. GatA subfamily. Heterotrimer of A, B and C subunits.

The enzyme catalyses L-glutamyl-tRNA(Gln) + L-glutamine + ATP + H2O = L-glutaminyl-tRNA(Gln) + L-glutamate + ADP + phosphate + H(+). Functionally, allows the formation of correctly charged Gln-tRNA(Gln) through the transamidation of misacylated Glu-tRNA(Gln) in organisms which lack glutaminyl-tRNA synthetase. The reaction takes place in the presence of glutamine and ATP through an activated gamma-phospho-Glu-tRNA(Gln). The sequence is that of Glutamyl-tRNA(Gln) amidotransferase subunit A from Streptococcus pneumoniae serotype 19F (strain G54).